Consider the following 119-residue polypeptide: Ribonuclease P protein component (119 aa).

It belongs to the RnpA family. As to quaternary structure, consists of a catalytic RNA component (M1 or rnpB) and a protein subunit.

It carries out the reaction Endonucleolytic cleavage of RNA, removing 5'-extranucleotides from tRNA precursor.. RNaseP catalyzes the removal of the 5'-leader sequence from pre-tRNA to produce the mature 5'-terminus. It can also cleave other RNA substrates such as 4.5S RNA. The protein component plays an auxiliary but essential role in vivo by binding to the 5'-leader sequence and broadening the substrate specificity of the ribozyme. This Streptococcus pyogenes serotype M5 (strain Manfredo) protein is Ribonuclease P protein component.